A 427-amino-acid polypeptide reads, in one-letter code: Glutamate-1-semialdehyde 2,1-aminomutase (427 aa).

Lys-267 is modified (N6-(pyridoxal phosphate)lysine).

The protein belongs to the class-III pyridoxal-phosphate-dependent aminotransferase family. HemL subfamily. Homodimer. Pyridoxal 5'-phosphate is required as a cofactor.

Its subcellular location is the cytoplasm. The enzyme catalyses (S)-4-amino-5-oxopentanoate = 5-aminolevulinate. It participates in porphyrin-containing compound metabolism; protoporphyrin-IX biosynthesis; 5-aminolevulinate from L-glutamyl-tRNA(Glu): step 2/2. This Geobacter sulfurreducens (strain ATCC 51573 / DSM 12127 / PCA) protein is Glutamate-1-semialdehyde 2,1-aminomutase.